A 444-amino-acid polypeptide reads, in one-letter code: Chromosome partition protein MukF (444 aa).

The tract at residues 212–240 (LDETSGNLRELQDTLNAAGDKLQAQLLRI) is leucine-zipper.

It belongs to the MukF family. Interacts, and probably forms a ternary complex, with MukE and MukB via its C-terminal region. The complex formation is stimulated by calcium or magnesium. It is required for an interaction between MukE and MukB.

It localises to the cytoplasm. It is found in the nucleoid. Functionally, involved in chromosome condensation, segregation and cell cycle progression. May participate in facilitating chromosome segregation by condensation DNA from both sides of a centrally located replisome during cell division. Not required for mini-F plasmid partitioning. Probably acts via its interaction with MukB and MukE. Overexpression results in anucleate cells. It has a calcium binding activity. The protein is Chromosome partition protein MukF of Haemophilus influenzae (strain PittEE).